A 350-amino-acid polypeptide reads, in one-letter code: tRNA uridine(34) hydroxylase (350 aa).

The Rhodanese domain maps to 146-240; the sequence is DDPDALFIDM…YARKAREQGL (95 aa). The active-site Cysteine persulfide intermediate is C200.

This sequence belongs to the TrhO family.

It catalyses the reaction uridine(34) in tRNA + AH2 + O2 = 5-hydroxyuridine(34) in tRNA + A + H2O. Functionally, catalyzes oxygen-dependent 5-hydroxyuridine (ho5U) modification at position 34 in tRNAs. This Shigella dysenteriae serotype 1 (strain Sd197) protein is tRNA uridine(34) hydroxylase.